A 38-amino-acid chain; its full sequence is Large ribosomal subunit protein bL36 (38 aa).

Belongs to the bacterial ribosomal protein bL36 family.

The sequence is that of Large ribosomal subunit protein bL36 from Polynucleobacter necessarius subsp. necessarius (strain STIR1).